Here is a 300-residue protein sequence, read N- to C-terminus: Jacalin-related lectin 32 (300 aa).

An N-acetylalanine modification is found at A2. 2 consecutive Jacalin-type lectin domains span residues 2–146 and 154–297; these read AQKV…YFTT and AKKL…HILP.

The protein belongs to the jacalin lectin family.

In terms of biological role, involved in gametophytic development. This chain is Jacalin-related lectin 32 (JAL32), found in Arabidopsis thaliana (Mouse-ear cress).